Reading from the N-terminus, the 413-residue chain is Serine hydroxymethyltransferase (413 aa).

Residues Leu-119 and 123–125 (GHL) contribute to the (6S)-5,6,7,8-tetrahydrofolate site. Lys-228 is subject to N6-(pyridoxal phosphate)lysine. Glu-243 contacts (6S)-5,6,7,8-tetrahydrofolate.

Belongs to the SHMT family. In terms of assembly, homodimer. The cofactor is pyridoxal 5'-phosphate.

Its subcellular location is the cytoplasm. It catalyses the reaction (6R)-5,10-methylene-5,6,7,8-tetrahydrofolate + glycine + H2O = (6S)-5,6,7,8-tetrahydrofolate + L-serine. It participates in one-carbon metabolism; tetrahydrofolate interconversion. It functions in the pathway amino-acid biosynthesis; glycine biosynthesis; glycine from L-serine: step 1/1. Functionally, catalyzes the reversible interconversion of serine and glycine with tetrahydrofolate (THF) serving as the one-carbon carrier. This reaction serves as the major source of one-carbon groups required for the biosynthesis of purines, thymidylate, methionine, and other important biomolecules. Also exhibits THF-independent aldolase activity toward beta-hydroxyamino acids, producing glycine and aldehydes, via a retro-aldol mechanism. The sequence is that of Serine hydroxymethyltransferase from Thermoanaerobacter pseudethanolicus (strain ATCC 33223 / 39E) (Clostridium thermohydrosulfuricum).